Reading from the N-terminus, the 164-residue chain is MSFATADLCDAHEDQLALGTLRVLEPVFHLFSRAECFSGEAVTLKVFEDNALVRATLEEKGAGRVLVIDGGGSLRCALVGGNLAQLAEQNGWAGIVLNGCVRDALELNEVNVGIAALTTSPRRGQKLGTGERDVAVHLPGALVRPGEWVYADIDGVLVASAALN.

Substrate is bound by residues 80-83 (GGNL) and R102. D103 is a binding site for a divalent metal cation.

The protein belongs to the class II aldolase/RraA-like family. As to quaternary structure, homotrimer. A divalent metal cation serves as cofactor.

It catalyses the reaction 4-hydroxy-4-methyl-2-oxoglutarate = 2 pyruvate. The enzyme catalyses oxaloacetate + H(+) = pyruvate + CO2. Its function is as follows. Catalyzes the aldol cleavage of 4-hydroxy-4-methyl-2-oxoglutarate (HMG) into 2 molecules of pyruvate. Also contains a secondary oxaloacetate (OAA) decarboxylase activity due to the common pyruvate enolate transition state formed following C-C bond cleavage in the retro-aldol and decarboxylation reactions. The polypeptide is Putative 4-hydroxy-4-methyl-2-oxoglutarate aldolase (Paraburkholderia phytofirmans (strain DSM 17436 / LMG 22146 / PsJN) (Burkholderia phytofirmans)).